We begin with the raw amino-acid sequence, 205 residues long: Nitrophorin-7 (205 aa).

A signal peptide spans 1 to 20 (MELYTALLAVTILSPSSIVG). 2 disulfides stabilise this stretch: cysteine 25/cysteine 144 and cysteine 62/cysteine 193. Aspartate 52 contributes to the histamine binding site. Residues histidine 80 and asparagine 91 each contribute to the heme site. Position 154 (aspartate 154) interacts with histamine.

This sequence belongs to the calycin superfamily. Nitrophorin family. In terms of assembly, forms oligomers (at pH 5.5). Heme b serves as cofactor. In terms of tissue distribution, expressed in the endothelial cells of the salivary glands.

It is found in the secreted. It carries out the reaction 3 nitrite + 2 H(+) = 2 nitric oxide + nitrate + H2O. Functionally, converts nitrite as the sole substrate to form nitric oxide gas (NO). NO(2-) serves both as an electron donor and as an electron acceptor. Binds to negatively charged cell surfaces of activated platelets; binds to L-a-phosphatidyl-L-serine (PS)-bearing phospholipid membranes. Once bound on an activated platelet, NP7 releases its stored nitric oxide gas (NO) into the victim's tissues while feeding, resulting in vasodilation and inhibition of platelet aggregation. Also acts as an anticoagulant by blocking coagulation-factor binding sites. Has antihistamine activity; binds histamine with high affinity. The sequence is that of Nitrophorin-7 from Rhodnius prolixus (Triatomid bug).